Here is a 79-residue protein sequence, read N- to C-terminus: Sec-independent protein translocase protein TatA (79 aa).

Residues 1–21 (MGGFTSIWHWVIVLLVIVLLF) form a helical membrane-spanning segment. Residues 48-79 (EEEAKNEPKTLDAQATQTKVHESSEIKSKQES) are disordered. Over residues 66–79 (KVHESSEIKSKQES) the composition is skewed to basic and acidic residues.

Belongs to the TatA/E family. In terms of assembly, the Tat system comprises two distinct complexes: a TatABC complex, containing multiple copies of TatA, TatB and TatC subunits, and a separate TatA complex, containing only TatA subunits. Substrates initially bind to the TatABC complex, which probably triggers association of the separate TatA complex to form the active translocon.

It is found in the cell inner membrane. Its function is as follows. Part of the twin-arginine translocation (Tat) system that transports large folded proteins containing a characteristic twin-arginine motif in their signal peptide across membranes. TatA could form the protein-conducting channel of the Tat system. The sequence is that of Sec-independent protein translocase protein TatA from Helicobacter pylori (strain ATCC 700392 / 26695) (Campylobacter pylori).